The chain runs to 431 residues: MSVRDYSGVQVISSRKHRSMSRLPTVLLLLASAAVLAAGGQEATEDPFADETDQCQISVSAETMKSLHGGSMQPDGTCDNLWESFLSQFHQVRENLTACQERAAAGPAPDPSSQFCQQLLDDAQRQMEQEHRQYAATLEEQLHAAQQETQQEQEMKKALQKQLDALTDSRNALYIDLLLANIAIGETKQALSYYNLMPASMPIDKLHEQIVRFVYRVTIYQDQRLLNLMRFVRDIPSVEERRSLYQLAQREVQKRPSQRDGYVAAVYALSVREDLPVYQANRQLYDDLVRQSETRLKEQVANGNFKQAAELAARQPQHFRQLQTSLATIELKHWRKFDRFVPYANALPQPAQRLEVLRVLLSQIGDREKKTSHKYLVKAARQFDICEQFIGRGKVDQAVKKQLEELRGKFATFAKGKNYQHYLSESRKSSG.

The signal sequence occupies residues M1–G39. An N-linked (GlcNAc...) asparagine glycan is attached at N95. Residues L120–S169 adopt a coiled-coil conformation.

As to quaternary structure, homodimer. In terms of tissue distribution, female salivary gland (at protein level). Not detected in female carcass without salivary glands, midgut and hemolymph (at protein level). Probably not expressed in male tissues.

It is found in the secreted. In terms of biological role, (Microbial infection) Facilitates efficient midgut colonization by Plasmodium berghei parasites. Promotes successful transmission of Plasmodium berghei at low infection densities. (Microbial infection) Facilitates efficient midgut colonization by Plasmodium falciparum. This chain is Saglin, found in Anopheles coluzzii (African malaria mosquito).